We begin with the raw amino-acid sequence, 608 residues long: Afamin (608 aa).

The signal sequence occupies residues 1–21; that stretch reads MRHLKLTGFIFFLLSLTESLA. 3 consecutive Albumin domains span residues 22-210, 211-403, and 404-599; these read LPTK…APIT, QYLK…KFNE, and TTER…KTGD. N33 is a glycosylation site (N-linked (GlcNAc...) asparagine). 10 disulfides stabilise this stretch: C77–C86, C99–C114, C113–C124, C148–C193, C224–C270, C269–C277, C289–C303, C302–C313, C340–C385, and C384–C393. An N-linked (GlcNAc...) asparagine glycan is attached at N109. N153 carries an N-linked (GlcNAc...) asparagine glycan. Positions 215–319 are binding pocket for hydrophobic ligands; that stretch reads ALSSYQRNVC…RADCIINANK (105 aa). N-linked (GlcNAc...) asparagine glycosylation is present at N402. Intrachain disulfides connect C416-C462, C461-C470, C483-C499, C498-C509, and C580-C589. An N-linked (GlcNAc...) asparagine glycan is attached at N488. The disordered stretch occupies residues 585-608; the sequence is KPEACFSPESSKTGDVSQDAEKQR.

Belongs to the ALB/AFP/VDB family. Forms a 1:1 complex with Wnt family members; interacts with WNT1, WNT2B, WNT3, WNT3A, WNT5A, WNT7A, WNT7B, WNT8, WNT9A, WNT9B, WNT10A and WNT10B. N-glycosylated; more than 90% of the glycans are sialylated.

Its subcellular location is the secreted. Its function is as follows. Functions as a carrier for hydrophobic molecules in body fluids. Essential for the solubility and activity of lipidated Wnt family members, including WNT1, WNT2B, WNT3, WNT3A, WNT5A, WNT7A, WNT7B, WNT8, WNT9A, WNT9B, WNT10A and WNT10B. Binds vitamin E. May transport vitamin E in body fluids under conditions where the lipoprotein system is not sufficient. May be involved in the transport of vitamin E across the blood-brain barrier. In Rattus norvegicus (Rat), this protein is Afamin (Afm).